The chain runs to 257 residues: Imidazole glycerol phosphate synthase subunit HisF (257 aa).

Residues aspartate 12 and aspartate 131 contribute to the active site.

Belongs to the HisA/HisF family. In terms of assembly, heterodimer of HisH and HisF.

The protein resides in the cytoplasm. The catalysed reaction is 5-[(5-phospho-1-deoxy-D-ribulos-1-ylimino)methylamino]-1-(5-phospho-beta-D-ribosyl)imidazole-4-carboxamide + L-glutamine = D-erythro-1-(imidazol-4-yl)glycerol 3-phosphate + 5-amino-1-(5-phospho-beta-D-ribosyl)imidazole-4-carboxamide + L-glutamate + H(+). It participates in amino-acid biosynthesis; L-histidine biosynthesis; L-histidine from 5-phospho-alpha-D-ribose 1-diphosphate: step 5/9. Its function is as follows. IGPS catalyzes the conversion of PRFAR and glutamine to IGP, AICAR and glutamate. The HisF subunit catalyzes the cyclization activity that produces IGP and AICAR from PRFAR using the ammonia provided by the HisH subunit. This chain is Imidazole glycerol phosphate synthase subunit HisF, found in Rhodococcus opacus (strain B4).